Reading from the N-terminus, the 314-residue chain is MPGFTCCVPGCYNNSHRDKALHFYTFPKDAELRRLWLKNVSRAGVSGCFSTFQPTTGHRLCSVHFQGGRKTYTVRVPTIFPLRGVNERKVARRPAGAAAARRRQQQQQQQQQQQQQQQQQQQQQQQQQQQQQSSPSASTAQTAQLQPNLVSASAAVLLTLQATVDSSQAPGSVQPAPITPTGEDVKPIDLTVQVEFAAAEGAAAAAAASELQAATAGLEAAECPMGPQLVVVGEEGFPDTGSDHSYSLSSGTTEEELLRKLNEQRDILALMEVKMKEMKGSIRHLRLTEAKLREELREKDRLLAMAVIRKKHGM.

A THAP-type zinc finger spans residues 1–80 (MPGFTCCVPG…TYTVRVPTIF (80 aa)). The tract at residues 85–111 (VNERKVARRPAGAAAARRRQQQQQQQQ) is disordered. Over residues 93–111 (RPAGAAAARRRQQQQQQQQ) the composition is skewed to low complexity. Residues 243–246 (DHSY) carry the HCFC1-binding motif (HBM) motif. A coiled-coil region spans residues 255-305 (EELLRKLNEQRDILALMEVKMKEMKGSIRHLRLTEAKLREELREKDRLLAM).

Belongs to the THAP11 family. Forms homodimers. Interacts via HBM with HCFC1. Forms a complex with HCFC1 and ZNF143. Expressed in skin fibroblasts.

The protein resides in the nucleus. Its subcellular location is the cytoplasm. Functionally, transcription factor, which has both transcriptional activation and repression activities. Also modulates chromatin accessibility. In complex with HCFC1 and ZNF143, regulates the expression of several genes, including AP2S1, ESCO2, OPHN1, RBL1, UBXN8 and ZNF32. May regulate the expression of genes that encode both cytoplasmic and mitochondrial ribosomal proteins. Required for normal mitochondrial development and function. Regulates mitochondrial gene expression, including that of components of the electron transport chain. Involved in the maintainance of pluripotency in early embryonic cells, possibly through its action on mitochondrial maturation which is required to meet high energy demands of these cells. Required for early development of retina, preventing premature exit of retinal progenitor cells from the cell cycle. This effect may also be mediated by its action on mitochondria. Through the regulation of MMACHC gene expression, controls cobalamin metabolism. Required for normal brain development and neural precursor differentiation. Involved in cell growth. In Homo sapiens (Human), this protein is THAP domain-containing protein 11 (THAP11).